Here is an 884-residue protein sequence, read N- to C-terminus: Chitin synthase E (884 aa).

2 disordered regions span residues 1 to 58 (MGTP…PAVS) and 73 to 108 (AVFA…SRAG). Composition is skewed to polar residues over residues 37–48 (QSLLERNNSSHY) and 84–93 (EAASENTFRA). Asn44 is a glycosylation site (N-linked (GlcNAc...) asparagine). A compositionally biased stretch (basic and acidic residues) spans 95–105 (SNGDKASREGS). The N-linked (GlcNAc...) asparagine glycan is linked to Asn301. Helical transmembrane passes span 513–532 (WLNG…GRIY), 556–576 (IMTW…MDLV), 597–617 (IVNN…FIMA), 635–655 (YFSL…VGAF), 681–701 (GGIV…ASVL), 708–728 (IITS…ILMV), and 812–832 (VLVC…TATG). Residue Asn840 is glycosylated (N-linked (GlcNAc...) asparagine). The helical transmembrane segment at 852-872 (VILWITAGLSLFRFIGSLWFL) threads the bilayer.

The protein belongs to the chitin synthase family. Class III subfamily.

Its subcellular location is the cell membrane. It catalyses the reaction [(1-&gt;4)-N-acetyl-beta-D-glucosaminyl](n) + UDP-N-acetyl-alpha-D-glucosamine = [(1-&gt;4)-N-acetyl-beta-D-glucosaminyl](n+1) + UDP + H(+). In terms of biological role, polymerizes chitin, a structural polymer of the cell wall and septum, by transferring the sugar moiety of UDP-GlcNAc to the non-reducing end of the growing chitin polymer. Plays an important role in septal growth or maintenance. Mediates colony spore formation. ChsE and chsD seem to play a functionally redundant role in lateral cell wall chitin synthesis. Involved in resistance to echinocandins. This Aspergillus niger (strain ATCC MYA-4892 / CBS 513.88 / FGSC A1513) protein is Chitin synthase E.